Consider the following 173-residue polypeptide: Archaemetzincin (173 aa).

His-130 lines the Zn(2+) pocket. The Proton acceptor role is filled by Glu-131. His-134, His-140, Cys-141, Cys-146, Cys-165, and Cys-168 together coordinate Zn(2+).

The protein belongs to the peptidase M54 family. Monomer. Zn(2+) serves as cofactor.

Functionally, probable zinc metalloprotease whose natural substrate is unknown. The sequence is that of Archaemetzincin from Natronomonas pharaonis (strain ATCC 35678 / DSM 2160 / CIP 103997 / JCM 8858 / NBRC 14720 / NCIMB 2260 / Gabara) (Halobacterium pharaonis).